We begin with the raw amino-acid sequence, 206 residues long: Large ribosomal subunit protein uL3 (206 aa).

Residues 127 to 151 are disordered; it reads SGGPSSHGSKFHRHLGGTGQATTPA.

Belongs to the universal ribosomal protein uL3 family. Part of the 50S ribosomal subunit. Forms a cluster with proteins L14 and L19.

In terms of biological role, one of the primary rRNA binding proteins, it binds directly near the 3'-end of the 23S rRNA, where it nucleates assembly of the 50S subunit. The sequence is that of Large ribosomal subunit protein uL3 from Borreliella afzelii (strain PKo) (Borrelia afzelii).